The primary structure comprises 360 residues: S-adenosylmethionine:tRNA ribosyltransferase-isomerase (360 aa).

It belongs to the QueA family. In terms of assembly, monomer.

The protein resides in the cytoplasm. It carries out the reaction 7-aminomethyl-7-carbaguanosine(34) in tRNA + S-adenosyl-L-methionine = epoxyqueuosine(34) in tRNA + adenine + L-methionine + 2 H(+). Its pathway is tRNA modification; tRNA-queuosine biosynthesis. In terms of biological role, transfers and isomerizes the ribose moiety from AdoMet to the 7-aminomethyl group of 7-deazaguanine (preQ1-tRNA) to give epoxyqueuosine (oQ-tRNA). This Rhizobium rhizogenes (strain K84 / ATCC BAA-868) (Agrobacterium radiobacter) protein is S-adenosylmethionine:tRNA ribosyltransferase-isomerase.